A 509-amino-acid chain; its full sequence is H/ACA ribonucleoprotein complex subunit DKC1 (509 aa).

The segment at 1-25 (MADAEAAMTFPKKHKKKKERKPLPE) is disordered. An N-acetylalanine modification is found at alanine 2. Residues 2-22 (ADAEAAMTFPKKHKKKKERKP) form a nucleolar localization region. The segment covering 11–20 (PKKHKKKKER) has biased composition (basic residues). Residues lysine 21, lysine 40, and lysine 44 each participate in a glycyl lysine isopeptide (Lys-Gly) (interchain with G-Cter in SUMO2) cross-link. The active-site Nucleophile is aspartate 126. Lysine 192 participates in a covalent cross-link: Glycyl lysine isopeptide (Lys-Gly) (interchain with G-Cter in SUMO2). A PUA domain is found at 297–372 (HKRLVMKDSA…VVAKIKRVIM (76 aa)). The segment at 381-509 (WGLGPKASQK…KARAAEELSG (129 aa)) is disordered. A Phosphoserine modification is found at serine 388. Residues lysine 395 and lysine 425 each participate in a glycyl lysine isopeptide (Lys-Gly) (interchain with G-Cter in SUMO2) cross-link. Over residues 416–425 (DYVDYSDSSK) the composition is skewed to basic and acidic residues. The nuclear and nucleolar localization stretch occupies residues 447–509 (KRKRDSDSDA…KARAAEELSG (63 aa)). Phosphoserine occurs at positions 452 and 454. Threonine 460 is subject to Phosphothreonine. Residues 466 to 475 (RVKKEKKKKK) show a composition bias toward basic residues. The segment covering 481–490 (GEEAAEDGDG) has biased composition (acidic residues). Phosphoserine is present on serine 508.

The protein belongs to the pseudouridine synthase TruB family. As to quaternary structure, part of the H/ACA small nucleolar ribonucleoprotein (H/ACA snoRNP) complex, which contains NHP2/NOLA2, GAR1/NOLA1, NOP10/NOLA3, and DKC1/NOLA4, which is presumed to be the catalytic subunit. The complex contains a stable core formed by binding of one or two NOP10-DKC1 heterodimers to NHP2; GAR1 subsequently binds to this core via DKC1. The complex binds a box H/ACA small nucleolar RNA (snoRNA), which may target the specific site of modification within the RNA substrate. During assembly, the complex contains NAF1 instead of GAR1/NOLA1. The complex also interacts with TERC, which contains a 3'-terminal domain related to the box H/ACA snoRNAs. Specific interactions with snoRNAs or TERC are mediated by GAR1 and NHP2. Associates with NOLC1/NOPP140. H/ACA snoRNPs interact with the SMN complex, consisting of SMN1 or SMN2, GEMIN2/SIP1, DDX20/GEMIN3, and GEMIN4. This is mediated by interaction between GAR1 and SMN1 or SMN2. The SMN complex may be required for correct assembly of the H/ACA snoRNP complex. Component of the telomerase holoenzyme complex composed of one molecule of TERT, one molecule of WRAP53/TCAB1, two molecules of H/ACA ribonucleoprotein complex subunits DKC1, NOP10, NHP2 and GAR1, and a telomerase RNA template component (TERC). The telomerase holoenzyme complex is associated with TEP1, SMG6/EST1A and POT1. Interacts with SHQ1; this interaction may lead to the stabilization of DKC1, from the time of its synthesis until its association with NOP10, NHP2, and NAF1 at the nascent H/ACA RNA. Interacts with HMBOX1. Interacts with DHX36.

The protein resides in the nucleus. The protein localises to the nucleolus. Its subcellular location is the cajal body. It carries out the reaction uridine in 5S rRNA = pseudouridine in 5S rRNA. Its function is as follows. Catalytic subunit of H/ACA small nucleolar ribonucleoprotein (H/ACA snoRNP) complex, which catalyzes pseudouridylation of rRNA. This involves the isomerization of uridine such that the ribose is subsequently attached to C5, instead of the normal N1. Each rRNA can contain up to 100 pseudouridine ('psi') residues, which may serve to stabilize the conformation of rRNAs. Required for ribosome biogenesis and telomere maintenance. Also required for correct processing or intranuclear trafficking of TERC, the RNA component of the telomerase reverse transcriptase (TERT) holoenzyme. The chain is H/ACA ribonucleoprotein complex subunit DKC1 (Dkc1) from Rattus norvegicus (Rat).